The sequence spans 155 residues: Ribosomal RNA large subunit methyltransferase H (155 aa).

S-adenosyl-L-methionine contacts are provided by residues leucine 73, glycine 104, and 123–128; that span reads LSALTL.

It belongs to the RNA methyltransferase RlmH family. In terms of assembly, homodimer.

Its subcellular location is the cytoplasm. It carries out the reaction pseudouridine(1915) in 23S rRNA + S-adenosyl-L-methionine = N(3)-methylpseudouridine(1915) in 23S rRNA + S-adenosyl-L-homocysteine + H(+). Specifically methylates the pseudouridine at position 1915 (m3Psi1915) in 23S rRNA. This chain is Ribosomal RNA large subunit methyltransferase H, found in Chromohalobacter salexigens (strain ATCC BAA-138 / DSM 3043 / CIP 106854 / NCIMB 13768 / 1H11).